The sequence spans 1207 residues: Disease resistance protein RPP2B (1207 aa).

Positions 15–180 (CEFDVFVSFR…EIVKNTFRML (166 aa)) constitute a TIR domain. Residue Glu89 is part of the active site. Residues 201-445 (ELEKLLMFDN…FLDIACFFRS (245 aa)) form the NB-ARC domain. 9 LRR repeats span residues 607 to 630 (PKELVDLSLRYSHIKQLWEDEKNT), 653 to 676 (AKNLERLDLEGCTSLDLLGSVKQM), 677 to 699 (NELIYLNLRDCTSLESLPKGFKI), 720 to 743 (SESIESLHLEGTAIERVVEHIESL), 744 to 767 (HSLILLNLKNCEKLKYLPNDLYKL), 769 to 791 (SLQELVLSGCSALESLPPIKEKM), 792 to 815 (ECLEILLMDGTSIKQTPEMSCLSN), 840 to 862 (NSFLSDLYLTNCNIDKLPDKFSS), and 863 to 886 (LRSLRCLCLSRNNIETLPESIEKL).

The protein belongs to the disease resistance TIR-NB-LRR family.

The enzyme catalyses NAD(+) + H2O = ADP-D-ribose + nicotinamide + H(+). In terms of biological role, disease resistance protein that cooperates with RPP2A to confer resistance to Hyaloperonospora parasitica isolate Cala2. This Arabidopsis thaliana (Mouse-ear cress) protein is Disease resistance protein RPP2B.